Here is a 311-residue protein sequence, read N- to C-terminus: Probable cysteine synthase (311 aa).

Position 45 is an N6-(pyridoxal phosphate)lysine (Lys45). Residues Asn75, 182-186 (GTGGT), and Ser270 contribute to the pyridoxal 5'-phosphate site.

It belongs to the cysteine synthase/cystathionine beta-synthase family. Pyridoxal 5'-phosphate is required as a cofactor.

The catalysed reaction is O-acetyl-L-serine + hydrogen sulfide = L-cysteine + acetate. It participates in amino-acid biosynthesis; L-cysteine biosynthesis; L-cysteine from L-serine: step 2/2. The polypeptide is Probable cysteine synthase (ytkP) (Bacillus subtilis (strain 168)).